The primary structure comprises 500 residues: Probable cation transporter HKT1;4 (500 aa).

Residues 1 to 12 (MPTSRRALAGGA) are Cytoplasmic-facing. 2 helical membrane-spanning segments follow: residues 13–33 (LSMHVAYFLAISCLGYGLLGV) and 74–94 (LVVLTVLMLLGGEVFVSLVGL). The Cytoplasmic portion of the chain corresponds to 95-156 (ASKWSKLRSD…ADTLRHNAVR (62 aa)). Residues 121-145 (ADIDGGDVENPTSSGEEAASRRRPM) form a disordered region. The next 2 membrane-spanning stretches (helical) occupy residues 157-177 (ALFYIVLAIFAVVHVVGAVAV) and 239-259 (VLAGNTLFAPLLAACVWAAAA). Residues 260–290 (ATRREELVEMAREGGRAAAAGYAHLMPARRC) lie on the Cytoplasmic side of the membrane. 2 consecutive transmembrane segments (helical) span residues 291-311 (WMLAATVAAFVAVLMALVCGM) and 346-366 (LSILAPAILVLFVLMMYLPPY). Topologically, residues 367–390 (TTWFPFEENSTTKDSNAENQGIRL) are cytoplasmic. Transmembrane regions (helical) follow at residues 391–411 (LESTLLSQLSYLTIFVIAICI) and 464–484 (GFVGRWSDSGKLILIFVMFFG). Residues 485-500 (RLKKFSMKGGKAWKLS) are Cytoplasmic-facing.

This sequence belongs to the TrkH potassium transport family. HKT (TC 2.A.38.3) subfamily.

The protein localises to the membrane. Probable cation transporter. May be involved in regulation of potassium-sodium homeostasis. The chain is Probable cation transporter HKT1;4 from Oryza sativa subsp. japonica (Rice).